The chain runs to 105 residues: Nitrogenase-stabilizing/protective protein NifW (105 aa).

It belongs to the NifW family. As to quaternary structure, homotrimer; associates with NifD.

Functionally, may protect the nitrogenase Fe-Mo protein from oxidative damage. This chain is Nitrogenase-stabilizing/protective protein NifW, found in Rhodospirillum centenum (strain ATCC 51521 / SW).